Consider the following 389-residue polypeptide: MEQQEEKRKIKAYQRKSKRSKSGSSSIPLDLVSEILLRLPEKSVARFRCVSKPWSSITTEPYFINLLTTRSPRLLLCFKANEKFFVSSIPQHRQTFETWNKSHSYSQLIDRYHMEFSEEMNYFPPTESVNGLICFQESARLIVWNPSTRQLLILPKPNGNSNDLTIFLGYDPVEGKHKVMCMEFSATYDTCRVLTLGSAQKLWRTVKTHNKHRSDYYDSGRCINGVVYHIAYVKDMCVWVLMSFDVRSEIFDMIELPSSDVHKDVLIDYNGRLACVGREIIEKNGIRLWILEKHNKWSSKDFLAPLVHIDKSLSTNKFLLKGFTHAGEIIYVESMFHKSAKIFFYDPVRNTSRRFELKGFTDDEFVLSNEHGYTLHVFPNHVESQISFT.

Positions 1–26 (MEQQEEKRKIKAYQRKSKRSKSGSSS) are disordered. The span at 9–21 (KIKAYQRKSKRSK) shows a compositional bias: basic residues. The F-box domain maps to 21-66 (KSGSSSIPLDLVSEILLRLPEKSVARFRCVSKPWSSITTEPYFINL).

In Arabidopsis thaliana (Mouse-ear cress), this protein is Putative F-box protein At3g10240.